Consider the following 310-residue polypeptide: Beta sliding clamp (310 aa).

The protein belongs to the beta sliding clamp family. As to quaternary structure, forms a ring-shaped head-to-tail homodimer around DNA which binds and tethers DNA polymerases and other proteins to the DNA. The DNA replisome complex has a single clamp-loading complex (3 tau and 1 each of delta, delta', psi and chi subunits) which binds 3 Pol III cores (1 core on the leading strand and 2 on the lagging strand) each with a beta sliding clamp dimer. Additional proteins in the replisome are other copies of gamma, psi and chi, Ssb, DNA helicase and RNA primase.

It localises to the cytoplasm. Its function is as follows. Confers DNA tethering and processivity to DNA polymerases and other proteins. Acts as a clamp, forming a ring around DNA (a reaction catalyzed by the clamp-loading complex) which diffuses in an ATP-independent manner freely and bidirectionally along dsDNA. Initially characterized for its ability to contact the catalytic subunit of DNA polymerase III (Pol III), a complex, multichain enzyme responsible for most of the replicative synthesis in bacteria; Pol III exhibits 3'-5' exonuclease proofreading activity. The beta chain is required for initiation of replication as well as for processivity of DNA replication. The polypeptide is Beta sliding clamp (dnaN) (Micrococcus luteus (Micrococcus lysodeikticus)).